The chain runs to 778 residues: Endonuclease MutS2 (778 aa).

Position 328-335 (328-335 (GPNTGGKT)) interacts with ATP. Positions 703–778 (LDLRGKRYEE…GSGCTIANLG (76 aa)) constitute a Smr domain.

This sequence belongs to the DNA mismatch repair MutS family. MutS2 subfamily. Homodimer. Binds to stalled ribosomes, contacting rRNA.

In terms of biological role, endonuclease that is involved in the suppression of homologous recombination and thus may have a key role in the control of bacterial genetic diversity. Acts as a ribosome collision sensor, splitting the ribosome into its 2 subunits. Detects stalled/collided 70S ribosomes which it binds and splits by an ATP-hydrolysis driven conformational change. Acts upstream of the ribosome quality control system (RQC), a ribosome-associated complex that mediates the extraction of incompletely synthesized nascent chains from stalled ribosomes and their subsequent degradation. Probably generates substrates for RQC. This Streptococcus equi subsp. zooepidemicus (strain H70) protein is Endonuclease MutS2.